The chain runs to 432 residues: Glutamate-1-semialdehyde 2,1-aminomutase (432 aa).

At lysine 271 the chain carries N6-(pyridoxal phosphate)lysine.

It belongs to the class-III pyridoxal-phosphate-dependent aminotransferase family. HemL subfamily. In terms of assembly, homodimer. Pyridoxal 5'-phosphate is required as a cofactor.

It localises to the cytoplasm. The enzyme catalyses (S)-4-amino-5-oxopentanoate = 5-aminolevulinate. Its pathway is porphyrin-containing compound metabolism; protoporphyrin-IX biosynthesis; 5-aminolevulinate from L-glutamyl-tRNA(Glu): step 2/2. The protein operates within porphyrin-containing compound metabolism; chlorophyll biosynthesis. This is Glutamate-1-semialdehyde 2,1-aminomutase from Prochlorococcus marinus (strain MIT 9211).